The chain runs to 229 residues: Choline-phosphate cytidylyltransferase (229 aa).

CDP-choline is bound by residues Leu6, Ala8, Gly9, Tyr80, Asn82, Ser85, and Ala101. Asp102 contributes to the Mg(2+) binding site. Residue Tyr185 coordinates CDP-choline. Glu211 and Asp213 together coordinate Mg(2+).

It belongs to the LicC/PntC cytidylyltransferase family. As to quaternary structure, monomer. Forms dimers in LicC-CDP-Cho-Mg(2+) crystals, but the monomer is probably the biologically functional unit. Mg(2+) serves as cofactor.

The enzyme catalyses phosphocholine + CTP + H(+) = CDP-choline + diphosphate. It participates in cell wall biogenesis; teichoic acid biosynthesis. Its pathway is cell wall biogenesis; lipoteichoic acid biosynthesis. Mg(2+) in slight excess of CTP gives maximal activity. Strongly inhibited by Ca(2+) and several other metal ions, such as Cd(2+), Co(2+), Cu(2+), Mn(2+), Ni(2+), Zn(2+) and Fe(2+). Also inhibited by Mg(2+) at high concentrations. CDP-Cho is a competitive inhibitor with respect to CTP, whereas diphosphate is a mixed-type inhibitor with respect to CTP. In terms of biological role, cytidylyltransferase involved in the biosynthesis of the phosphocholine containing cell wall constituents, teichoic acid and lipoteichoic acid, which are essential for cell separation and pathogenesis. Catalyzes the activation of phosphocholine (P-Cho) to CDP-choline (CDP-Cho). Can also use phosphoethanolamine and 2-aminoethylphosphonate, with much lower efficiency. Shows lower activity with dCTP, weak activity with ATP and no activity with GTP, TTP, UTP, dATP, dGTP and dTTP. This is Choline-phosphate cytidylyltransferase from Streptococcus pneumoniae (strain ATCC BAA-255 / R6).